Reading from the N-terminus, the 200-residue chain is ATP-dependent Clp protease proteolytic subunit 2 (200 aa).

Ser-100 (nucleophile) is an active-site residue.

Belongs to the peptidase S14 family. In terms of assembly, fourteen ClpP subunits assemble into 2 heptameric rings which stack back to back to give a disk-like structure with a central cavity, resembling the structure of eukaryotic proteasomes.

The protein localises to the cytoplasm. It carries out the reaction Hydrolysis of proteins to small peptides in the presence of ATP and magnesium. alpha-casein is the usual test substrate. In the absence of ATP, only oligopeptides shorter than five residues are hydrolyzed (such as succinyl-Leu-Tyr-|-NHMec, and Leu-Tyr-Leu-|-Tyr-Trp, in which cleavage of the -Tyr-|-Leu- and -Tyr-|-Trp bonds also occurs).. Its function is as follows. Cleaves peptides in various proteins in a process that requires ATP hydrolysis. Has a chymotrypsin-like activity. Plays a major role in the degradation of misfolded proteins. This is ATP-dependent Clp protease proteolytic subunit 2 from Streptomyces avermitilis (strain ATCC 31267 / DSM 46492 / JCM 5070 / NBRC 14893 / NCIMB 12804 / NRRL 8165 / MA-4680).